The sequence spans 734 residues: Photosystem I P700 chlorophyll a apoprotein A2 (734 aa).

8 helical membrane passes run 46–69 (IFASHFGQLAIIFLWTSGNLFHVA), 135–158 (LYTGALFLLFLSAISLIAGWLHLQ), 175–199 (LNHHLSGLFGVSSLAWTGHLVHVAI), 273–291 (IAHHHLAIAFIFLVAGHMY), 330–353 (LHFQLGLALASLGVITSLVAQHMY), 369–395 (AALYTHHQYIAGFIMTGAFAHGAIFFI), 417–439 (AIISHLSWASLFLGFHTLGLYVH), and 517–535 (FLVHHAIALGLHTTTLILV). [4Fe-4S] cluster-binding residues include cysteine 559 and cysteine 568. Transmembrane regions (helical) follow at residues 575-596 (AFYLAVFWMLNTIGWVTFYWHW) and 643-665 (LSVWAWMFLFGHLVWATGFMFLI). Residues histidine 654, methionine 662, and tyrosine 670 each coordinate chlorophyll a. Tryptophan 671 provides a ligand contact to phylloquinone. A helical membrane pass occupies residues 707–727 (LVGLAHFSVGYIFTYAAFLIA).

This sequence belongs to the PsaA/PsaB family. In terms of assembly, the PsaA/B heterodimer binds the P700 chlorophyll special pair and subsequent electron acceptors. PSI consists of a core antenna complex that captures photons, and an electron transfer chain that converts photonic excitation into a charge separation. The eukaryotic PSI reaction center is composed of at least 11 subunits. P700 is a chlorophyll a/chlorophyll a' dimer, A0 is one or more chlorophyll a, A1 is one or both phylloquinones and FX is a shared 4Fe-4S iron-sulfur center. is required as a cofactor.

The protein localises to the plastid. Its subcellular location is the chloroplast thylakoid membrane. The catalysed reaction is reduced [plastocyanin] + hnu + oxidized [2Fe-2S]-[ferredoxin] = oxidized [plastocyanin] + reduced [2Fe-2S]-[ferredoxin]. In terms of biological role, psaA and PsaB bind P700, the primary electron donor of photosystem I (PSI), as well as the electron acceptors A0, A1 and FX. PSI is a plastocyanin-ferredoxin oxidoreductase, converting photonic excitation into a charge separation, which transfers an electron from the donor P700 chlorophyll pair to the spectroscopically characterized acceptors A0, A1, FX, FA and FB in turn. Oxidized P700 is reduced on the lumenal side of the thylakoid membrane by plastocyanin. This chain is Photosystem I P700 chlorophyll a apoprotein A2, found in Citrus sinensis (Sweet orange).